We begin with the raw amino-acid sequence, 99 residues long: Fetal and adult testis-expressed transcript protein homolog (99 aa).

A helical membrane pass occupies residues A79–H98.

Interacts with BIK and RNF183. Interacts with IMMT/MIC60and EMD.

It is found in the mitochondrion. It localises to the mitochondrion outer membrane. The protein resides in the endoplasmic reticulum membrane. Involved in the regulation of endoplasmic reticulum (ER)-mitochondria coupling. Negatively regulates the ER-mitochondria distance and Ca(2+) transfer from ER to mitochondria possibly implicating it in the regulation of apoptosis. May collaborate with RNF183 to restrain BIK protein levels thus regulating apoptotic signaling. The protein is Fetal and adult testis-expressed transcript protein homolog (Fate1) of Mus musculus (Mouse).